Here is a 743-residue protein sequence, read N- to C-terminus: MSQDIFTPTRVTCQVGGKEIIIESGRMANQAHGEVWIQCGGTVVLVTVCSQPLEFDKGFFPLTVEYSEKMYAAGRIPGSFFRREIGRPSERETLVARLIDRPIRPLFPKGLNEDVQVLASVISADQENESDVLALTGASAALMLSPLPFEGPVAGGRIARVGGQFVLNPTFEQQAQSDLNIVFAASGDALTMVEGDARFISEDVIIEALEWGRLQILPLVEIQHKLRELCGKPKMNFTPHQDDEALVACVHELALANGMEEALRVPEKMARKDARKAVKDKVMETLKADPAWAENEAALKAVSDILGGLEKKLVRARIVNEGTRIDGRDTTTVRPIQIQTGLLPRAHGSALFRRGETKSLVVATLGSSTDEQRMDSLTGDVTKRFMLHYNFPPFSVGEVKPVRVSRREIGHGALAEKSLRPVLPADADFPFTLRVVAETMESNGSSSMAAVCGGSLSLMDAGVPVSAPVAGVAMGLIKEGEKFIVLTDILGDEDALGDMDFKIAGTAEGVTGVQMDIKITGLTTEIMRTAMQQAREGRLHILEEMAKAIASPRKELSRYAPQHAEVFVNPDIIRLIIGPGGKNIKAITAATGASVDIEDSGRVSIFAPTAEALEKAREMVSYYDQRPDLGKNYNAKVRKIMEIGAIVEVLPNVEALVHVSQLDVNRVEQPGDVARLGEDMLVKVIEINGDRIRASRKAVLLEEQGHPWNPEDTARPQRSDRGDRGDRRGDRGGRDRRDRGDRR.

Mg(2+) is bound by residues Asp-494 and Asp-500. A KH domain is found at 561-620; the sequence is PQHAEVFVNPDIIRLIIGPGGKNIKAITAATGASVDIEDSGRVSIFAPTAEALEKAREMV. The region spanning 630-704 is the S1 motif domain; it reads GKNYNAKVRK…SRKAVLLEEQ (75 aa). The tract at residues 702–743 is disordered; that stretch reads EEQGHPWNPEDTARPQRSDRGDRGDRRGDRGGRDRRDRGDRR. Basic and acidic residues predominate over residues 712–743; sequence DTARPQRSDRGDRGDRRGDRGGRDRRDRGDRR.

Belongs to the polyribonucleotide nucleotidyltransferase family. Requires Mg(2+) as cofactor.

Its subcellular location is the cytoplasm. The enzyme catalyses RNA(n+1) + phosphate = RNA(n) + a ribonucleoside 5'-diphosphate. Its function is as follows. Involved in mRNA degradation. Catalyzes the phosphorolysis of single-stranded polyribonucleotides processively in the 3'- to 5'-direction. The protein is Polyribonucleotide nucleotidyltransferase of Desulfovibrio desulfuricans (strain ATCC 27774 / DSM 6949 / MB).